Reading from the N-terminus, the 1779-residue chain is Collagen alpha-1(IV) chain (1779 aa).

The N-terminal stretch at 1 to 23 (MLPFWKRLLYAAVIAGALVGADA) is a signal peptide. The N-linked (GlcNAc...) asparagine glycan is linked to Asn-72. Disordered regions lie at residues 89 to 643 (GNRG…KPAL), 655 to 1187 (DKGY…LPGL), 1200 to 1285 (TGAP…IGPR), and 1336 to 1530 (GLPG…RGYE). Positions 144–163 (QAGVPGVQGPAGNPGAPGIN) are enriched in low complexity. 2 stretches are compositionally biased toward basic and acidic residues: residues 196-217 (KGEK…KGEP) and 249-259 (PRGEHGLKGEK). A compositionally biased stretch (low complexity) spans 360–369 (PGLNGLPGNP). The span at 434-443 (GQKGGAGLPG) shows a compositional bias: gly residues. The segment covering 531–545 (GRPGTPGAAGAPGQK) has biased composition (low complexity). Positions 724–747 (PGFHGRDGAKGDKGSFGRSGEKGE) are enriched in basic and acidic residues. 2 stretches are compositionally biased toward low complexity: residues 913-931 (VGPI…PGID) and 1015-1036 (PGLM…QGLD). Positions 1106 to 1127 (EKGDQGRSGIDGRDGINGEKGE) are enriched in basic and acidic residues. Residues 1151-1170 (APGMDGLPGAAGAPGAVGYP) are compositionally biased toward low complexity. Composition is skewed to basic and acidic residues over residues 1224-1245 (IRGD…EQGE), 1496-1505 (ERGEKGERGL), and 1517-1529 (PKGD…ERGY). The region spanning 1555-1778 (GILITRHSQS…SRCQVCMKNS (224 aa)) is the Collagen IV NC1 domain. 6 disulfide bridges follow: Cys-1570–Cys-1659, Cys-1603–Cys-1656, Cys-1615–Cys-1621, Cys-1678–Cys-1774, Cys-1712–Cys-1771, and Cys-1724–Cys-1731.

It belongs to the type IV collagen family. As to quaternary structure, trimers of two alpha 1(IV) and one alpha 2(IV) chain. Type IV collagen forms a mesh-like network linked through intermolecular interactions between 7S domains and between NC1 domains. In terms of processing, prolines at the third position of the tripeptide repeating unit (G-X-Y) are hydroxylated in some or all of the chains. Type IV collagens contain numerous cysteine residues which are involved in inter- and intramolecular disulfide bonding. 12 of these, located in the NC1 domain, are conserved in all known type IV collagens.

It is found in the secreted. The protein localises to the extracellular space. The protein resides in the extracellular matrix. Its subcellular location is the basement membrane. Collagen type IV is specific for basement membranes. This is Collagen alpha-1(IV) chain from Drosophila melanogaster (Fruit fly).